A 625-amino-acid chain; its full sequence is Probable potassium transport system protein Kup (625 aa).

12 helical membrane-spanning segments follow: residues 13–33 (TALA…LYAL), 53–73 (ILSI…VAIV), 103–123 (IYMI…GIIT), 141–161 (VFDP…FLVQ), 172–192 (FGPI…HSVI), 206–226 (AIQF…AVVL), 250–270 (WFFV…ALLL), 282–302 (LLVP…ATVI), 340–360 (IYVP…ILIF), 369–389 (AYGL…AVFI), 400–420 (VLLL…ATSL), and 422–442 (ILSG…ILMT).

Belongs to the HAK/KUP transporter (TC 2.A.72) family.

Its subcellular location is the cell inner membrane. The catalysed reaction is K(+)(in) + H(+)(in) = K(+)(out) + H(+)(out). Functionally, transport of potassium into the cell. Likely operates as a K(+):H(+) symporter. The chain is Probable potassium transport system protein Kup from Acinetobacter baumannii (strain AYE).